A 1013-amino-acid polypeptide reads, in one-letter code: Polyprotein of EF-Ts, chloroplastic (1013 aa).

The N-terminal 43 residues, 1 to 43, are a transit peptide targeting the chloroplast; it reads MLRELGRTATVKAHGRSVLRPVRGPAGRRQVAFTGVRPSVRVF. An S1 motif 1 domain is found at 64 to 133; sequence GSEYEGTVTT…EKKRVSLELK (70 aa). Over residues 141-150 the composition is skewed to acidic residues; that stretch reads SAEESDDIIT. Residues 141–163 form a disordered region; the sequence is SAEESDDIITEPDREGADATDDD. Positions 227–331 constitute an S1 motif 2 domain; the sequence is MEEVTGKVAR…DGRGISLTHF (105 aa). The disordered stretch occupies residues 772 to 798; that stretch reads QAKAAAPAAPKKEEPKKEEPKKATVAV. The span at 781 to 793 shows a compositional bias: basic and acidic residues; the sequence is PKKEEPKKEEPKK.

It belongs to the EF-Ts family. In terms of assembly, component of the chloroplast ribosome 30S and 70S subunits, as well as polysomes. Component of the chloroplast ribosome 70S subunit, and at low levels, present in polysomes. As to quaternary structure, associates transiently with chloroplast polysomes.

Its subcellular location is the plastid. It localises to the chloroplast. In terms of biological role, associates with the EF-Tu.GDP complex and induces the exchange of GDP to GTP. It remains bound to the aminoacyl-tRNA.EF-Tu.GTP complex up to the GTP hydrolysis stage on the ribosome. Functionally, binds to psbD and psbA mRNAs 5'-untranslated regions (UTRs) in vitro. The sequence is that of Polyprotein of EF-Ts, chloroplastic from Chlamydomonas reinhardtii (Chlamydomonas smithii).